Consider the following 417-residue polypeptide: UDP-N-acetylglucosamine 1-carboxyvinyltransferase (417 aa).

A phosphoenolpyruvate-binding site is contributed by 22–23 (KN). Arg-92 provides a ligand contact to UDP-N-acetyl-alpha-D-glucosamine. Residue Cys-116 is the Proton donor of the active site. At Cys-116 the chain carries 2-(S-cysteinyl)pyruvic acid O-phosphothioketal. UDP-N-acetyl-alpha-D-glucosamine contacts are provided by Asp-304 and Ile-326.

Belongs to the EPSP synthase family. MurA subfamily.

Its subcellular location is the cytoplasm. The catalysed reaction is phosphoenolpyruvate + UDP-N-acetyl-alpha-D-glucosamine = UDP-N-acetyl-3-O-(1-carboxyvinyl)-alpha-D-glucosamine + phosphate. The protein operates within cell wall biogenesis; peptidoglycan biosynthesis. Cell wall formation. Adds enolpyruvyl to UDP-N-acetylglucosamine. The protein is UDP-N-acetylglucosamine 1-carboxyvinyltransferase of Desulforapulum autotrophicum (strain ATCC 43914 / DSM 3382 / VKM B-1955 / HRM2) (Desulfobacterium autotrophicum).